Here is a 442-residue protein sequence, read N- to C-terminus: C4-dicarboxylate transport protein (442 aa).

The next 9 helical transmembrane spans lie at 13–33 (VLYF…HFYP), 49–69 (GIKM…IAGM), 81–101 (LALL…LVVV), 149–169 (AFAK…GFAL), 193–213 (MIAI…AFTI), 227–247 (LMGS…GIIA), 312–332 (IYLT…MTLL), 336–356 (TLLA…GSGF), and 357–377 (IVLA…LAII).

It belongs to the dicarboxylate/amino acid:cation symporter (DAACS) (TC 2.A.23) family.

The protein localises to the cell membrane. In terms of biological role, responsible for the transport of dicarboxylates such as succinate, fumarate, and malate across the membrane. This chain is C4-dicarboxylate transport protein, found in Polynucleobacter asymbioticus (strain DSM 18221 / CIP 109841 / QLW-P1DMWA-1) (Polynucleobacter necessarius subsp. asymbioticus).